Consider the following 693-residue polypeptide: Transcription activator of gluconeogenesis BC1G_14637 (693 aa).

The segment covering Met1–Val12 has biased composition (acidic residues). Residues Met1–Pro75 form a disordered region. Residues Tyr21–Gly49 show a composition bias toward basic and acidic residues. Residues Asn52–Val62 show a composition bias toward polar residues. The span at Pro65–Arg74 shows a compositional bias: basic and acidic residues. The zn(2)-C6 fungal-type DNA-binding region spans Cys84–Cys112. 2 stretches are compositionally biased toward polar residues: residues Ser144–Thr155 and Ser275–Met287. Disordered stretches follow at residues Ser144 to Thr170, Ser273 to Asn299, Thr350 to Asp413, and Asn531 to Pro567. Residues Ser356–Thr367 are compositionally biased toward low complexity. The segment covering Gly369–Tyr379 has biased composition (polar residues). Positions Lys394–Gly408 are enriched in low complexity.

It belongs to the ERT1/acuK family.

The protein localises to the nucleus. Transcription factor which regulates nonfermentable carbon utilization. Activator of gluconeogenetic genes. This is Transcription activator of gluconeogenesis BC1G_14637 from Botryotinia fuckeliana (strain B05.10) (Noble rot fungus).